Here is a 903-residue protein sequence, read N- to C-terminus: Protein translocase subunit SecA (903 aa).

ATP is bound by residues Q89, 107–111 (GEGKT), and D502. Residues C887, C889, C898, and H899 each contribute to the Zn(2+) site.

Belongs to the SecA family. Monomer and homodimer. Part of the essential Sec protein translocation apparatus which comprises SecA, SecYEG and auxiliary proteins SecDF-YajC and YidC. Zn(2+) is required as a cofactor.

It localises to the cell inner membrane. It is found in the cytoplasm. The enzyme catalyses ATP + H2O + cellular proteinSide 1 = ADP + phosphate + cellular proteinSide 2.. In terms of biological role, part of the Sec protein translocase complex. Interacts with the SecYEG preprotein conducting channel. Has a central role in coupling the hydrolysis of ATP to the transfer of proteins into and across the cell membrane, serving both as a receptor for the preprotein-SecB complex and as an ATP-driven molecular motor driving the stepwise translocation of polypeptide chains across the membrane. This chain is Protein translocase subunit SecA, found in Jannaschia sp. (strain CCS1).